A 100-amino-acid chain; its full sequence is Large ribosomal subunit protein bL21 (100 aa).

Belongs to the bacterial ribosomal protein bL21 family. As to quaternary structure, part of the 50S ribosomal subunit. Contacts proteins L15 and L20.

Its function is as follows. Binds directly to 23S rRNA, probably serving to organize its structure. The protein is Large ribosomal subunit protein bL21 of Deinococcus radiodurans (strain ATCC 13939 / DSM 20539 / JCM 16871 / CCUG 27074 / LMG 4051 / NBRC 15346 / NCIMB 9279 / VKM B-1422 / R1).